We begin with the raw amino-acid sequence, 132 residues long: D-beta-hydroxybutyrate dehydrogenase, mitochondrial (132 aa).

NAD(+) is bound at residue 3–27; sequence LVTGCDSGFGFSLAKHLHSKGFLVF. Lys17 carries the N6-acetyllysine modification. Position 59 (Ser59) interacts with substrate. Residue Tyr66 is the Proton acceptor of the active site. Position 70 is an N6-acetyllysine (Lys70). A glycan (O-linked (GlcNAc) serine) is linked at Ser77. Position 104 is a phosphoserine (Ser104).

The protein belongs to the short-chain dehydrogenases/reductases (SDR) family. In terms of assembly, homotetramer.

The protein localises to the mitochondrion inner membrane. Its subcellular location is the mitochondrion matrix. It carries out the reaction (R)-3-hydroxybutanoate + NAD(+) = acetoacetate + NADH + H(+). Its activity is regulated as follows. Requires phosphatidylcholine as an allosteric activator for enzymatic activity. In Mesocricetus auratus (Golden hamster), this protein is D-beta-hydroxybutyrate dehydrogenase, mitochondrial.